A 257-amino-acid polypeptide reads, in one-letter code: Imidazole glycerol phosphate synthase subunit HisF (257 aa).

Catalysis depends on residues Asp-11 and Asp-130.

Belongs to the HisA/HisF family. As to quaternary structure, heterodimer of HisH and HisF.

The protein resides in the cytoplasm. The catalysed reaction is 5-[(5-phospho-1-deoxy-D-ribulos-1-ylimino)methylamino]-1-(5-phospho-beta-D-ribosyl)imidazole-4-carboxamide + L-glutamine = D-erythro-1-(imidazol-4-yl)glycerol 3-phosphate + 5-amino-1-(5-phospho-beta-D-ribosyl)imidazole-4-carboxamide + L-glutamate + H(+). The protein operates within amino-acid biosynthesis; L-histidine biosynthesis; L-histidine from 5-phospho-alpha-D-ribose 1-diphosphate: step 5/9. Functionally, IGPS catalyzes the conversion of PRFAR and glutamine to IGP, AICAR and glutamate. The HisF subunit catalyzes the cyclization activity that produces IGP and AICAR from PRFAR using the ammonia provided by the HisH subunit. The chain is Imidazole glycerol phosphate synthase subunit HisF from Bradyrhizobium diazoefficiens (strain JCM 10833 / BCRC 13528 / IAM 13628 / NBRC 14792 / USDA 110).